Consider the following 249-residue polypeptide: 1-(5-phosphoribosyl)-5-[(5-phosphoribosylamino)methylideneamino] imidazole-4-carboxamide isomerase (249 aa).

Aspartate 8 functions as the Proton acceptor in the catalytic mechanism. Residue aspartate 131 is the Proton donor of the active site.

The protein belongs to the HisA/HisF family.

It localises to the cytoplasm. The catalysed reaction is 1-(5-phospho-beta-D-ribosyl)-5-[(5-phospho-beta-D-ribosylamino)methylideneamino]imidazole-4-carboxamide = 5-[(5-phospho-1-deoxy-D-ribulos-1-ylimino)methylamino]-1-(5-phospho-beta-D-ribosyl)imidazole-4-carboxamide. It participates in amino-acid biosynthesis; L-histidine biosynthesis; L-histidine from 5-phospho-alpha-D-ribose 1-diphosphate: step 4/9. The protein is 1-(5-phosphoribosyl)-5-[(5-phosphoribosylamino)methylideneamino] imidazole-4-carboxamide isomerase of Aromatoleum aromaticum (strain DSM 19018 / LMG 30748 / EbN1) (Azoarcus sp. (strain EbN1)).